Here is a 230-residue protein sequence, read N- to C-terminus: Large ribosomal subunit protein uL1 (230 aa).

The protein belongs to the universal ribosomal protein uL1 family. As to quaternary structure, part of the 50S ribosomal subunit.

In terms of biological role, binds directly to 23S rRNA. The L1 stalk is quite mobile in the ribosome, and is involved in E site tRNA release. Protein L1 is also a translational repressor protein, it controls the translation of the L11 operon by binding to its mRNA. This chain is Large ribosomal subunit protein uL1, found in Nitrosospira multiformis (strain ATCC 25196 / NCIMB 11849 / C 71).